The sequence spans 308 residues: Very-long-chain enoyl-CoA reductase (308 aa).

Topologically, residues 1-86 are cytoplasmic; sequence MKHYEVEIRD…YFRDLGAQIS (86 aa). Lys-22 carries the post-translational modification N6-acetyllysine. Position 58 is a phosphoserine (Ser-58). Lys-60 bears the N6-acetyllysine mark. A helical membrane pass occupies residues 87–106; it reads WVTVFLTEYAGPLFIYLLFY. The Lumenal portion of the chain corresponds to 107-124; sequence FRVPFIYGRKYDFTSSRH. The chain crosses the membrane as a helical span at residues 125-147; sequence TVVHLACMCHSFHYIKRLLETLF. Residues 148 to 158 lie on the Cytoplasmic side of the membrane; the sequence is VHRFSHGTMPL. The chain crosses the membrane as a helical span at residues 159–180; that stretch reads RNIFKNCTYYWGFAAWMAYYIN. The Lumenal portion of the chain corresponds to 181-189; that stretch reads HPLYTPPTY. Residues 190–216 form a helical membrane-spanning segment; the sequence is GVQQVKLALAIFVICQLGNFSIHMALR. The Cytoplasmic portion of the chain corresponds to 217-245; the sequence is DLRPAGSKTRKIPYPTKNPFTWLFLLVSC. The helical transmembrane segment at 246–262 threads the bilayer; that stretch reads PNYTYEVGSWIGFAIMT. At 263 to 264 the chain is on the lumenal side; sequence QC. The chain crosses the membrane as a helical span at residues 265–292; that stretch reads VPVALFSLVGFTQMTIWAKGKHRSYLKE. The Cytoplasmic portion of the chain corresponds to 293 to 308; the sequence is FRDYPPLRMPIIPFLL.

It belongs to the steroid 5-alpha reductase family. As to quaternary structure, interacts with ELOVL1 and LASS2. Post-translationally, glycosylated. As to expression, expressed at high levels in brain and is also found at lower levels in several other tissues.

It is found in the endoplasmic reticulum membrane. The catalysed reaction is a very-long-chain 2,3-saturated fatty acyl-CoA + NADP(+) = a very-long-chain (2E)-enoyl-CoA + NADPH + H(+). It catalyses the reaction octadecanoyl-CoA + NADP(+) = (2E)-octadecenoyl-CoA + NADPH + H(+). It carries out the reaction (2E,7Z,10Z,13Z,16Z)-docosapentaenoyl-CoA + NADPH + H(+) = (7Z,10Z,13Z,16Z)-docosatetraenoyl-CoA + NADP(+). The enzyme catalyses (2E,7Z,10Z,13Z,16Z,19Z)-docosahexaenoyl-CoA + NADPH + H(+) = (7Z,10Z,13Z,16Z,19Z)-docosapentaenoyl-CoA + NADP(+). The catalysed reaction is (2E,8Z,11Z,14Z)-eicosatetraenoyl-CoA + NADPH + H(+) = (8Z,11Z,14Z)-eicosatrienoyl-CoA + NADP(+). It catalyses the reaction (2E)-hexadecenoyl-CoA + NADPH + H(+) = hexadecanoyl-CoA + NADP(+). Its pathway is lipid metabolism; fatty acid biosynthesis. It participates in lipid metabolism; sphingolipid metabolism. Its function is as follows. Involved in both the production of very long-chain fatty acids for sphingolipid synthesis and the degradation of the sphingosine moiety in sphingolipids through the sphingosine 1-phosphate metabolic pathway. Catalyzes the last of the four reactions of the long-chain fatty acids elongation cycle. This endoplasmic reticulum-bound enzymatic process, allows the addition of 2 carbons to the chain of long- and very long-chain fatty acids/VLCFAs per cycle. This enzyme reduces the trans-2,3-enoyl-CoA fatty acid intermediate to an acyl-CoA that can be further elongated by entering a new cycle of elongation. Thereby, it participates in the production of VLCFAs of different chain lengths that are involved in multiple biological processes as precursors of membrane lipids and lipid mediators. Catalyzes the saturation step of the sphingosine 1-phosphate metabolic pathway, the conversion of trans-2-hexadecenoyl-CoA to palmitoyl-CoA. This chain is Very-long-chain enoyl-CoA reductase (Tecr), found in Rattus norvegicus (Rat).